An 881-amino-acid chain; its full sequence is Plakophilin-2 (881 aa).

The segment at 1-348 (MAAPGAPAEY…FTDSQLGNAD (348 aa)) is required for interaction with influenza A virus RNA polymerase subunit PB1. Positions 1–360 (MAAPGAPAEY…MTLERAVSML (360 aa)) are required for binding to single-stranded DNA. Ser-44 carries the post-translational modification Phosphoserine. The residue at position 46 (Arg-46) is an Omega-N-methylarginine. Phosphoserine; by MARK3 is present on Ser-82. Residues Ser-132, Ser-135, Ser-151, Ser-154, Ser-155, Ser-169, and Ser-172 each carry the phosphoserine modification. Thr-177 is subject to Phosphothreonine. Ser-183, Ser-197, Ser-251, Ser-294, and Ser-329 each carry phosphoserine. A disordered region spans residues 282 to 314 (QNRASRSSWHQSSFHSTRTLREAGPSVAVDSSG). Residues 286–297 (SRSSWHQSSFHS) are compositionally biased toward low complexity. ARM repeat units follow at residues 341 to 383 (DSQL…ECFQ), 385 to 424 (SEARKRVNQLRGILKLLQLLKVQNEDVQRAVCGALRNLVF), 427 to 467 (NDNK…NLRS), 571 to 616 (DGRK…NLSY), 671 to 711 (PKGV…NLTA), 719 to 758 (SVAQTVVQKESGLQHTRKMLHVGDPSVKKTAISLLRNLSR), 763 to 804 (QNEI…NIIQ), and 807 to 849 (YQNA…SLWA).

The protein belongs to the beta-catenin family. In terms of assembly, interacts with DSC2. Interacts with JUP. Interacts with KRT5/CK5, KRT8/CK8, KRT14/CK14, KRT18/CK18 and VIM. Interacts (via N-terminus) with MARK3/C-TAK1. Interacts with DSP. Interacts with DSG1, DSG2 and DSG3. Interacts (via N-terminus) with CTNNB1. Interacts with CDH1. Interacts with the RNA polymerase III (Pol III) complex proteins POLR3A/RPC155, POLR3F/RPC39 and POLR3C/RPC82. Interacts with CTNNA3. Interacts (via N-terminus) with SCN5A/Nav1.5. Interacts with ANK3/ANKG and GJA1/CX43. As to quaternary structure, (Microbial infection) Interacts (via N-terminus) with influenza A virus RNA polymerase subunit PB1 (via C-terminus); the interaction competitively inhibits the interaction between the subunits PB1 and PB2. In terms of tissue distribution, expressed at intercalated disks in the heart (at protein level). Expressed in gingival epithelial, endothelial and fibroblast cells (at protein level). Faintly expressed in tracheal epithelial cells (at protein level). Widely expressed. Found at desmosomal plaques in simple and stratified epithelia and in non-epithelial tissues such as myocardium and lymph node follicles. In most stratified epithelia found in the desmosomes of the basal cell layer and seems to be absent from suprabasal strata. (Microbial infection) Abundantly expressed in tracheal epithelial cells following influenza A virus infection (at protein level).

It localises to the nucleus. The protein resides in the cell junction. It is found in the desmosome. The protein localises to the cytoplasm. A component of desmosome cell-cell junctions which are required for positive regulation of cellular adhesion. Regulates focal adhesion turnover resulting in changes in focal adhesion size, cell adhesion and cell spreading, potentially via transcriptional modulation of beta-integrins. Required to maintain gingival epithelial barrier function. Important component of the desmosome that is also required for localization of desmosome component proteins such as DSC2, DSG2 and JUP to the desmosome cell-cell junction. Required for the formation of desmosome cell junctions in cardiomyocytes, thereby required for the correct formation of the heart, specifically trabeculation and formation of the atria walls. Loss of desmosome cell junctions leads to mis-localization of DSP and DSG2 resulting in disruption of cell-cell adhesion and disordered intermediate filaments. Modulates profibrotic gene expression in cardiomyocytes via regulation of DSP expression and subsequent activation of downstream TGFB1 and MAPK14/p38 MAPK signaling. Required for cardiac sodium current propagation and electrical synchrony in cardiac myocytes, via ANK3 stabilization and modulation of SCN5A/Nav1.5 localization to cell-cell junctions. Required for mitochondrial function, nuclear envelope integrity and positive regulation of SIRT3 transcription via maintaining DES localization at its nuclear envelope and cell tip anchoring points, and thereby preserving regulation of the transcriptional program. Maintenance of nuclear envelope integrity protects against DNA damage and transcriptional dysregulation of genes, especially those involved in the electron transport chain, thereby preserving mitochondrial function and protecting against superoxide radical anion generation. Binds single-stranded DNA (ssDNA). May regulate the localization of GJA1 to gap junctions in intercalated disks of the heart. Involved in the inhibition of viral infection by influenza A viruses (IAV). Acts as a host restriction factor for IAV viral propagation, potentially via disrupting the interaction of IAV polymerase complex proteins. The sequence is that of Plakophilin-2 from Homo sapiens (Human).